Here is a 312-residue protein sequence, read N- to C-terminus: HTH-type transcriptional regulator PtxR (312 aa).

The HTH lysR-type domain occupies leucine 11–threonine 68. Positions phenylalanine 28 to arginine 47 form a DNA-binding region, H-T-H motif.

Belongs to the LysR transcriptional regulatory family. As to quaternary structure, monomer in solution. May dimerize on binding to DNA. Interacts with PtxS in the absence of 2-ketogluconate. Binding of the 2-ketogluconate effector to PtxS causes PtxS/PtxR complex dissociation.

With respect to regulation, negatively regulated by PtxS, which interacts with PtxR and prevents its activity. In terms of biological role, plays an important role in the regulation of the production of the virulence factor exotoxin A (toxA), via positive regulation of the transcription of the toxA gene. Acts by binding directly to the toxA promoter region. Besides toxA, PtxR modulates the expression of genes that code for the QS-controlled virulence factors. It negatively regulates the expression of the rhamnolipid and pyocyanine genes, through the autoinducer synthase RhlI, and the PQS synthesis operon pqsABCDE, while it positively regulates the expression of lasB through the autoinducer synthase LasI. Also positively regulates the expression of the exotoxin A regulatory protein (toxR or regA). Functionally, in addition, is involved in the positive regulation of glucose metabolism via the regulation of the expression of the kgu and gad operons. Acts by binding directly to the promoter region of the kgu and gad operons. This chain is HTH-type transcriptional regulator PtxR, found in Pseudomonas aeruginosa (strain ATCC 15692 / DSM 22644 / CIP 104116 / JCM 14847 / LMG 12228 / 1C / PRS 101 / PAO1).